The following is a 226-amino-acid chain: Uridylate kinase (226 aa).

Residue Gly-9 to Ser-10 coordinates ATP. UMP is bound at residue Gly-46. Residues Gly-47 and Arg-51 each coordinate ATP. UMP is bound by residues Asp-68 and Thr-116 to Thr-122. 4 residues coordinate ATP: Thr-142, Asn-143, Tyr-148, and Asp-151.

This sequence belongs to the UMP kinase family. In terms of assembly, homohexamer.

It localises to the cytoplasm. It carries out the reaction UMP + ATP = UDP + ADP. It participates in pyrimidine metabolism; CTP biosynthesis via de novo pathway; UDP from UMP (UMPK route): step 1/1. Its activity is regulated as follows. Inhibited by UTP. Its function is as follows. Catalyzes the reversible phosphorylation of UMP to UDP. The sequence is that of Uridylate kinase from Methanocaldococcus jannaschii (strain ATCC 43067 / DSM 2661 / JAL-1 / JCM 10045 / NBRC 100440) (Methanococcus jannaschii).